Reading from the N-terminus, the 415-residue chain is MADLIVGIQWGDEGKGKVVDALAGEYDYVVRYQGGHNAGHTIVVDSKKIALHLLPSGILYERCKNVIGNGVVINLEQLLNESKAFGNLQGRLFISDRAHIILPYHEILDIAKEKSRQSAAIGTTGKGIGPCYGDKVSRNGVRLMDLKNLDKLREKVDSIYQHIQYVQTLYNVELPSVQSVMEHIESIAPQILPFVTDTTQLLWAAQNRGEKILCEGAQGSMLDIDHGTYPFVTSSTTIASGACSGSGLAPRDIARVIGVAKAYCTRVGNGMFPTQEDGEIGERLRQAGGEFGTTTGRARRCGWFDAVAVRYACRLNGCESLSIMKLDVLDGFERVKVCVGYEYEGKQIDYIPTDYDNVKPIYREFVGWDKTCGVRTFNALPSQAQHYIKELEKIIGVKISMVSTSPERDDMIMLG.

GTP contacts are provided by residues 11 to 17 and 39 to 41; these read GDEGKGK and GHT. Residue Asp-12 is the Proton acceptor of the active site. Mg(2+) contacts are provided by Asp-12 and Gly-39. Residues 12 to 15, 37 to 40, Thr-124, Arg-138, Gln-218, Thr-233, and Arg-297 each bind IMP; these read DEGK and NAGH. His-40 (proton donor) is an active-site residue. 293 to 299 serves as a coordination point for substrate; sequence TTTGRAR. GTP contacts are provided by residues Arg-299, 325–327, and 403–405; these read KLD and STS.

This sequence belongs to the adenylosuccinate synthetase family. In terms of assembly, homodimer. Requires Mg(2+) as cofactor.

The protein localises to the cytoplasm. The catalysed reaction is IMP + L-aspartate + GTP = N(6)-(1,2-dicarboxyethyl)-AMP + GDP + phosphate + 2 H(+). It functions in the pathway purine metabolism; AMP biosynthesis via de novo pathway; AMP from IMP: step 1/2. In terms of biological role, plays an important role in the de novo pathway of purine nucleotide biosynthesis. Catalyzes the first committed step in the biosynthesis of AMP from IMP. This is Adenylosuccinate synthetase from Helicobacter hepaticus (strain ATCC 51449 / 3B1).